The following is a 281-amino-acid chain: MSGLEAQQALFASNGDAIILGRIGSLEVRLANSRAAIQAAQELRFRVFFEEMGARKETIEAVEQRDADRFDTICDHLLVYDTALPVPEHQQIVGTYRLMRNEQAEKALGFYSADEYDVQRLKLSRPNLRLLELGRSCVKPEYRSKRTVELLWQGAWAYCRRHSIDVMFGCASFHGAVPAAHALGLSFLHHNCRATDDWDVRALPHRYQAMDLMPKEAINNKVALFSMPPLVKGYLRLGAMIGDGAVIDEAFGTTDVFIILPIERISSRYISYYGAEANRFV.

It belongs to the acetyltransferase family. OlsB subfamily.

It catalyses the reaction a (3R)-hydroxyacyl-[ACP] + L-ornithine = a lyso-ornithine lipid + holo-[ACP] + H(+). Its pathway is lipid metabolism. Its function is as follows. Catalyzes the first step in the biosynthesis of ornithine lipids, which are phosphorus-free membrane lipids. Catalyzes the 3-hydroxyacyl-acyl carrier protein-dependent acylation of ornithine to form lyso-ornithine lipid (LOL). In Brucella abortus (strain 2308), this protein is L-ornithine N(alpha)-acyltransferase.